The chain runs to 434 residues: 3-phosphoshikimate 1-carboxyvinyltransferase (434 aa).

3-phosphoshikimate contacts are provided by lysine 22, serine 23, and arginine 27. Residue lysine 22 coordinates phosphoenolpyruvate. Residues glycine 93 and arginine 121 each contribute to the phosphoenolpyruvate site. Residues serine 168, serine 169, glutamine 170, serine 199, aspartate 320, and lysine 347 each coordinate 3-phosphoshikimate. Phosphoenolpyruvate is bound at residue glutamine 170. Residue aspartate 320 is the Proton acceptor of the active site. Residues arginine 351, arginine 394, and lysine 419 each contribute to the phosphoenolpyruvate site.

The protein belongs to the EPSP synthase family. As to quaternary structure, monomer.

It localises to the cytoplasm. It carries out the reaction 3-phosphoshikimate + phosphoenolpyruvate = 5-O-(1-carboxyvinyl)-3-phosphoshikimate + phosphate. It participates in metabolic intermediate biosynthesis; chorismate biosynthesis; chorismate from D-erythrose 4-phosphate and phosphoenolpyruvate: step 6/7. Its function is as follows. Catalyzes the transfer of the enolpyruvyl moiety of phosphoenolpyruvate (PEP) to the 5-hydroxyl of shikimate-3-phosphate (S3P) to produce enolpyruvyl shikimate-3-phosphate and inorganic phosphate. The chain is 3-phosphoshikimate 1-carboxyvinyltransferase from Paraburkholderia phymatum (strain DSM 17167 / CIP 108236 / LMG 21445 / STM815) (Burkholderia phymatum).